A 556-amino-acid chain; its full sequence is 2-succinyl-5-enolpyruvyl-6-hydroxy-3-cyclohexene-1-carboxylate synthase (556 aa).

It belongs to the TPP enzyme family. MenD subfamily. Homodimer. The cofactor is Mg(2+). Mn(2+) is required as a cofactor. Thiamine diphosphate serves as cofactor.

The enzyme catalyses isochorismate + 2-oxoglutarate + H(+) = 5-enolpyruvoyl-6-hydroxy-2-succinyl-cyclohex-3-ene-1-carboxylate + CO2. Its pathway is quinol/quinone metabolism; 1,4-dihydroxy-2-naphthoate biosynthesis; 1,4-dihydroxy-2-naphthoate from chorismate: step 2/7. It participates in quinol/quinone metabolism; menaquinone biosynthesis. In terms of biological role, catalyzes the thiamine diphosphate-dependent decarboxylation of 2-oxoglutarate and the subsequent addition of the resulting succinic semialdehyde-thiamine pyrophosphate anion to isochorismate to yield 2-succinyl-5-enolpyruvyl-6-hydroxy-3-cyclohexene-1-carboxylate (SEPHCHC). The polypeptide is 2-succinyl-5-enolpyruvyl-6-hydroxy-3-cyclohexene-1-carboxylate synthase (Escherichia coli (strain ATCC 8739 / DSM 1576 / NBRC 3972 / NCIMB 8545 / WDCM 00012 / Crooks)).